The chain runs to 258 residues: Lysine-rich coiled-coil protein 1 (258 aa).

The segment at aspartate 142 to phenylalanine 258 is disordered. Over residues alanine 150–arginine 161 the composition is skewed to basic residues. 3 stretches are compositionally biased toward basic and acidic residues: residues histidine 162–serine 175, cysteine 183–leucine 213, and lysine 220–lysine 232. Residues glutamate 211 to glutamate 248 are a coiled coil.

The polypeptide is Lysine-rich coiled-coil protein 1 (KRCC1) (Pongo abelii (Sumatran orangutan)).